The sequence spans 156 residues: Protein CURVATURE THYLAKOID 1C, chloroplastic (156 aa).

A chloroplast-targeting transit peptide spans 1–55 (MASISATLPSPLLLTQRKSNLTSIQKLPFSLTRGTNDLSPLSLTRNPSSISLMVK). Topologically, residues 56 to 83 (ASGESSDSSTDLDVVSTIQNVWDKSEDR) are stromal. A helical membrane pass occupies residues 84 to 104 (LGLIGLGFAGIVALWASLNLI). Over 105–109 (TAIDK) the chain is Lumenal. A helical membrane pass occupies residues 110 to 130 (LPVISSGFELVGILFSTWFTY). Residues 131-156 (RYLLFKPDRQELSKIVKKSVADILGQ) lie on the Stromal side of the membrane.

The protein belongs to the CURT family. In terms of assembly, homo- and heterodimers and trimers. Interacts with PSAD2.

It is found in the plastid. Its subcellular location is the chloroplast thylakoid membrane. In terms of biological role, determines thylakoid architecture by inducing membrane curvature. The polypeptide is Protein CURVATURE THYLAKOID 1C, chloroplastic (CURT1C) (Arabidopsis thaliana (Mouse-ear cress)).